Consider the following 318-residue polypeptide: Methionyl-tRNA formyltransferase (318 aa).

117 to 120 (SLLP) contributes to the (6S)-5,6,7,8-tetrahydrofolate binding site.

This sequence belongs to the Fmt family.

The catalysed reaction is L-methionyl-tRNA(fMet) + (6R)-10-formyltetrahydrofolate = N-formyl-L-methionyl-tRNA(fMet) + (6S)-5,6,7,8-tetrahydrofolate + H(+). Functionally, attaches a formyl group to the free amino group of methionyl-tRNA(fMet). The formyl group appears to play a dual role in the initiator identity of N-formylmethionyl-tRNA by promoting its recognition by IF2 and preventing the misappropriation of this tRNA by the elongation apparatus. This is Methionyl-tRNA formyltransferase from Malacoplasma penetrans (strain HF-2) (Mycoplasma penetrans).